Here is a 239-residue protein sequence, read N- to C-terminus: tRNA (guanine-N(7)-)-methyltransferase (239 aa).

The S-adenosyl-L-methionine site is built by E69, E94, D121, and D144. Residue D144 is part of the active site. K148 provides a ligand contact to substrate. The segment at 150–155 (RHNKRR) is interaction with RNA. Residues D180 and 217–220 (TKFE) contribute to the substrate site.

Belongs to the class I-like SAM-binding methyltransferase superfamily. TrmB family. As to quaternary structure, monomer.

It carries out the reaction guanosine(46) in tRNA + S-adenosyl-L-methionine = N(7)-methylguanosine(46) in tRNA + S-adenosyl-L-homocysteine. Its pathway is tRNA modification; N(7)-methylguanine-tRNA biosynthesis. Functionally, catalyzes the formation of N(7)-methylguanine at position 46 (m7G46) in tRNA. This Salmonella typhimurium (strain LT2 / SGSC1412 / ATCC 700720) protein is tRNA (guanine-N(7)-)-methyltransferase.